Reading from the N-terminus, the 336-residue chain is Holliday junction branch migration complex subunit RuvB (336 aa).

The interval 4–184 is large ATPase domain (RuvB-L); it reads ADRLISAGTT…FGIVQRLEFY (181 aa). Residues isoleucine 23, arginine 24, glycine 65, lysine 68, threonine 69, threonine 70, 131–133, arginine 174, tyrosine 184, and arginine 221 contribute to the ATP site; that span reads EDY. Threonine 69 is a binding site for Mg(2+). The interval 185 to 255 is small ATPAse domain (RuvB-S); that stretch reads QVPDLQYIVS…IAAQALDMLN (71 aa). The head domain (RuvB-H) stretch occupies residues 258–336; the sequence is AEGFDYMDRK…HFGITPPEMP (79 aa). The DNA site is built by arginine 294, arginine 313, and arginine 318.

The protein belongs to the RuvB family. Homohexamer. Forms an RuvA(8)-RuvB(12)-Holliday junction (HJ) complex. HJ DNA is sandwiched between 2 RuvA tetramers; dsDNA enters through RuvA and exits via RuvB. An RuvB hexamer assembles on each DNA strand where it exits the tetramer. Each RuvB hexamer is contacted by two RuvA subunits (via domain III) on 2 adjacent RuvB subunits; this complex drives branch migration. In the full resolvosome a probable DNA-RuvA(4)-RuvB(12)-RuvC(2) complex forms which resolves the HJ.

The protein localises to the cytoplasm. It catalyses the reaction ATP + H2O = ADP + phosphate + H(+). The RuvA-RuvB-RuvC complex processes Holliday junction (HJ) DNA during genetic recombination and DNA repair, while the RuvA-RuvB complex plays an important role in the rescue of blocked DNA replication forks via replication fork reversal (RFR). RuvA specifically binds to HJ cruciform DNA, conferring on it an open structure. The RuvB hexamer acts as an ATP-dependent pump, pulling dsDNA into and through the RuvAB complex. RuvB forms 2 homohexamers on either side of HJ DNA bound by 1 or 2 RuvA tetramers; 4 subunits per hexamer contact DNA at a time. Coordinated motions by a converter formed by DNA-disengaged RuvB subunits stimulates ATP hydrolysis and nucleotide exchange. Immobilization of the converter enables RuvB to convert the ATP-contained energy into a lever motion, pulling 2 nucleotides of DNA out of the RuvA tetramer per ATP hydrolyzed, thus driving DNA branch migration. The RuvB motors rotate together with the DNA substrate, which together with the progressing nucleotide cycle form the mechanistic basis for DNA recombination by continuous HJ branch migration. Branch migration allows RuvC to scan DNA until it finds its consensus sequence, where it cleaves and resolves cruciform DNA. This is Holliday junction branch migration complex subunit RuvB from Shigella sonnei (strain Ss046).